A 190-amino-acid polypeptide reads, in one-letter code: Probable chorismate pyruvate-lyase (190 aa).

Residues Arg74, Leu112, and Glu173 each contribute to the substrate site.

Belongs to the UbiC family.

The protein localises to the cytoplasm. It catalyses the reaction chorismate = 4-hydroxybenzoate + pyruvate. It functions in the pathway cofactor biosynthesis; ubiquinone biosynthesis. In terms of biological role, removes the pyruvyl group from chorismate, with concomitant aromatization of the ring, to provide 4-hydroxybenzoate (4HB) for the ubiquinone pathway. The chain is Probable chorismate pyruvate-lyase from Bordetella bronchiseptica (strain ATCC BAA-588 / NCTC 13252 / RB50) (Alcaligenes bronchisepticus).